The primary structure comprises 38 residues: Large ribosomal subunit protein bL36 (38 aa).

Belongs to the bacterial ribosomal protein bL36 family.

This Pseudoalteromonas atlantica (strain T6c / ATCC BAA-1087) protein is Large ribosomal subunit protein bL36.